The sequence spans 147 residues: Endothelial differentiation-related factor 1 homolog (147 aa).

The interval 1–69 (MAESDWDTVT…KLDRETEELH (69 aa)) is disordered. Residues 33–42 (RRGEEVETSK) show a composition bias toward basic and acidic residues. Residues 46–58 (AGQNKQHTITRNT) are compositionally biased toward polar residues. Basic and acidic residues predominate over residues 59–69 (AKLDRETEELH). The region spanning 81–135 (IQQGRQGKGMTQKDLATKINEKPQVIADYECGKAIPNNQVMGKIERVIGLKLRGK) is the HTH cro/C1-type domain. Positions 92-111 (QKDLATKINEKPQVIADYEC) form a DNA-binding region, H-T-H motif.

The protein resides in the nucleus. In terms of biological role, probable transcriptional coactivator. The polypeptide is Endothelial differentiation-related factor 1 homolog (edf1) (Xenopus laevis (African clawed frog)).